The chain runs to 178 residues: Probable chorismate pyruvate-lyase (178 aa).

Substrate contacts are provided by R72, L110, and E169.

It belongs to the UbiC family.

It localises to the cytoplasm. It catalyses the reaction chorismate = 4-hydroxybenzoate + pyruvate. It participates in cofactor biosynthesis; ubiquinone biosynthesis. Functionally, removes the pyruvyl group from chorismate, with concomitant aromatization of the ring, to provide 4-hydroxybenzoate (4HB) for the ubiquinone pathway. The protein is Probable chorismate pyruvate-lyase of Nitrosomonas eutropha (strain DSM 101675 / C91 / Nm57).